The sequence spans 117 residues: Large ribosomal subunit protein bL19 (117 aa).

Belongs to the bacterial ribosomal protein bL19 family.

Its function is as follows. This protein is located at the 30S-50S ribosomal subunit interface and may play a role in the structure and function of the aminoacyl-tRNA binding site. This Shewanella frigidimarina (strain NCIMB 400) protein is Large ribosomal subunit protein bL19.